The primary structure comprises 339 residues: D-erythrose-4-phosphate dehydrogenase (339 aa).

R11–I12 contacts NAD(+). Residues S158–T160, R204, T217–K218, and R240 contribute to the substrate site. Residue C159 is the Nucleophile of the active site. N322 contacts NAD(+).

This sequence belongs to the glyceraldehyde-3-phosphate dehydrogenase family. Epd subfamily. As to quaternary structure, homotetramer.

Its subcellular location is the cytoplasm. The enzyme catalyses D-erythrose 4-phosphate + NAD(+) + H2O = 4-phospho-D-erythronate + NADH + 2 H(+). It participates in cofactor biosynthesis; pyridoxine 5'-phosphate biosynthesis; pyridoxine 5'-phosphate from D-erythrose 4-phosphate: step 1/5. In terms of biological role, catalyzes the NAD-dependent conversion of D-erythrose 4-phosphate to 4-phosphoerythronate. In Aliivibrio salmonicida (strain LFI1238) (Vibrio salmonicida (strain LFI1238)), this protein is D-erythrose-4-phosphate dehydrogenase.